A 63-amino-acid chain; its full sequence is uncharacterized protein (63 aa).

This is an uncharacterized protein from Archaeoglobus fulgidus (strain ATCC 49558 / DSM 4304 / JCM 9628 / NBRC 100126 / VC-16).